A 75-amino-acid polypeptide reads, in one-letter code: MKQDIHPKYTKVTVNCANCGNAFETRSTRNTIKVDICNNCHPFYTGKQMLVDTAGRVERFNKRFAKSTASQAKAQ.

This sequence belongs to the bacterial ribosomal protein bL31 family. Type A subfamily. Part of the 50S ribosomal subunit.

In terms of biological role, binds the 23S rRNA. The chain is Large ribosomal subunit protein bL31 from Chlorobium limicola (strain DSM 245 / NBRC 103803 / 6330).